We begin with the raw amino-acid sequence, 172 residues long: Translation initiation factor IF-3 (172 aa).

The protein belongs to the IF-3 family. Monomer.

The protein resides in the cytoplasm. Functionally, IF-3 binds to the 30S ribosomal subunit and shifts the equilibrium between 70S ribosomes and their 50S and 30S subunits in favor of the free subunits, thus enhancing the availability of 30S subunits on which protein synthesis initiation begins. In Bartonella tribocorum (strain CIP 105476 / IBS 506), this protein is Translation initiation factor IF-3.